The sequence spans 55 residues: Ribosome modulation factor (55 aa).

The protein belongs to the ribosome modulation factor family. Associates exclusively with 100S ribosomes.

It localises to the cytoplasm. During stationary phase, converts 70S ribosomes to an inactive dimeric form (100S ribosomes). May form immature 90S particles, which are converted to mature 100S ribosomes by the hibernation promoting factor Hpf. This chain is Ribosome modulation factor, found in Escherichia coli O157:H7.